The primary structure comprises 516 residues: Cytochrome P450 1A2 (516 aa).

Residue Ser69 is glycosylated (O-linked (GlcNAc) serine). Substrate is bound at residue Phe226. A heme-binding site is contributed by Cys458.

The protein belongs to the cytochrome P450 family. Interacts with PGRMC1; the interaction requires PGRMC1 homodimerization. It depends on heme as a cofactor.

The protein localises to the endoplasmic reticulum membrane. It localises to the microsome membrane. The enzyme catalyses an organic molecule + reduced [NADPH--hemoprotein reductase] + O2 = an alcohol + oxidized [NADPH--hemoprotein reductase] + H2O + H(+). It carries out the reaction 17beta-estradiol + reduced [NADPH--hemoprotein reductase] + O2 = 2-hydroxy-17beta-estradiol + oxidized [NADPH--hemoprotein reductase] + H2O + H(+). The catalysed reaction is 17beta-estradiol + reduced [NADPH--hemoprotein reductase] + O2 = 4-hydroxy-17beta-estradiol + oxidized [NADPH--hemoprotein reductase] + H2O + H(+). It catalyses the reaction estrone + reduced [NADPH--hemoprotein reductase] + O2 = 2-hydroxyestrone + oxidized [NADPH--hemoprotein reductase] + H2O + H(+). The enzyme catalyses estrone + reduced [NADPH--hemoprotein reductase] + O2 = 4-hydroxyestrone + oxidized [NADPH--hemoprotein reductase] + H2O + H(+). It carries out the reaction cholesterol + reduced [NADPH--hemoprotein reductase] + O2 = 25-hydroxycholesterol + oxidized [NADPH--hemoprotein reductase] + H2O + H(+). The catalysed reaction is all-trans-retinol + reduced [NADPH--hemoprotein reductase] + O2 = all-trans-retinal + oxidized [NADPH--hemoprotein reductase] + 2 H2O + H(+). It catalyses the reaction all-trans-retinal + reduced [NADPH--hemoprotein reductase] + O2 = all-trans-retinoate + oxidized [NADPH--hemoprotein reductase] + H2O + 2 H(+). The enzyme catalyses (5Z,8Z,11Z,14Z)-eicosatetraenoate + reduced [NADPH--hemoprotein reductase] + O2 = (14R,15S)-epoxy-(5Z,8Z,11Z)-eicosatrienoate + oxidized [NADPH--hemoprotein reductase] + H2O + H(+). It carries out the reaction (5Z,8Z,11Z,14Z)-eicosatetraenoate + reduced [NADPH--hemoprotein reductase] + O2 = (14S,15R)-epoxy-(5Z,8Z,11Z)-eicosatrienoate + oxidized [NADPH--hemoprotein reductase] + H2O + H(+). The catalysed reaction is (5Z,8Z,11Z,14Z,17Z)-eicosapentaenoate + reduced [NADPH--hemoprotein reductase] + O2 = (17R,18S)-epoxy-(5Z,8Z,11Z,14Z)-eicosatetraenoate + oxidized [NADPH--hemoprotein reductase] + H2O + H(+). It catalyses the reaction (4Z,7Z,10Z,13Z,16Z,19Z)-docosahexaenoate + reduced [NADPH--hemoprotein reductase] + O2 = (19R,20S)-epoxy-(4Z,7Z,10Z,13Z,16Z)-docosapentaenoate + oxidized [NADPH--hemoprotein reductase] + H2O + H(+). The enzyme catalyses (5S)-hydroperoxy-(6E,8Z,11Z,14Z)-eicosatetraenoate = 5-oxo-(6E,8Z,11Z,14Z)-eicosatetraenoate + H2O. It carries out the reaction (12S)-hydroperoxy-(5Z,8Z,10E,14Z)-eicosatetraenoate = 12-oxo-(5Z,8Z,10E,14Z)-eicosatetraenoate + H2O. The catalysed reaction is (15S)-hydroperoxy-(5Z,8Z,11Z,13E)-eicosatetraenoate = 15-oxo-(5Z,8Z,11Z,13E)-eicosatetraenoate + H2O. It catalyses the reaction (13S)-hydroperoxy-(9Z,11E)-octadecadienoate = 13-oxo-(9Z,11E)-octadecadienoate + H2O. The enzyme catalyses (5Z,8Z,11Z,14Z)-eicosatetraenoate + reduced [NADPH--hemoprotein reductase] + O2 = 13-hydroxy-(5Z,8Z,11Z,14Z)-eicosatetraenoate + oxidized [NADPH--hemoprotein reductase] + H2O + H(+). It carries out the reaction (5Z,8Z,11Z,14Z)-eicosatetraenoate + reduced [NADPH--hemoprotein reductase] + O2 = 19-hydroxy-(5Z,8Z,11Z,14Z)-eicosatetraenoate + oxidized [NADPH--hemoprotein reductase] + H2O + H(+). The catalysed reaction is (9Z,12Z)-octadecadienoate + reduced [NADPH--hemoprotein reductase] + O2 = 11-hydroxy-(9Z,12Z)-octadecadienoate + oxidized [NADPH--hemoprotein reductase] + H2O + H(+). It functions in the pathway cofactor metabolism; retinol metabolism. It participates in steroid metabolism; cholesterol metabolism. The protein operates within lipid metabolism; arachidonate metabolism. Its function is as follows. A cytochrome P450 monooxygenase involved in the metabolism of various endogenous substrates, including fatty acids, steroid hormones and vitamins. Mechanistically, uses molecular oxygen inserting one oxygen atom into a substrate, and reducing the second into a water molecule, with two electrons provided by NADPH via cytochrome P450 reductase (NADPH--hemoprotein reductase). Catalyzes the hydroxylation of carbon-hydrogen bonds. Exhibits high catalytic activity for the formation of hydroxyestrogens from estrone (E1) and 17beta-estradiol (E2), namely 2-hydroxy E1 and E2. Metabolizes cholesterol toward 25-hydroxycholesterol, a physiological regulator of cellular cholesterol homeostasis. May act as a major enzyme for all-trans retinoic acid biosynthesis in the liver. Catalyzes two successive oxidative transformation of all-trans retinol to all-trans retinal and then to the active form all-trans retinoic acid. Primarily catalyzes stereoselective epoxidation of the last double bond of polyunsaturated fatty acids (PUFA), displaying a strong preference for the (R,S) stereoisomer. Catalyzes bisallylic hydroxylation and omega-1 hydroxylation of PUFA. May also participate in eicosanoids metabolism by converting hydroperoxide species into oxo metabolites (lipoxygenase-like reaction, NADPH-independent). Plays a role in the oxidative metabolism of xenobiotics. Catalyzes the N-hydroxylation of heterocyclic amines and the O-deethylation of phenacetin. Metabolizes caffeine via N3-demethylation. This Pongo abelii (Sumatran orangutan) protein is Cytochrome P450 1A2 (CYP1A2).